The primary structure comprises 83 residues: RNA-binding protein Hfq (83 aa).

The Sm domain maps to 10–69; it reads DPFLNALRREHVPVSIYLVNGIKLQGQIESFDQYVVLLRNTVTQMVYKHAISTIVPGRAV.

This sequence belongs to the Hfq family. In terms of assembly, homohexamer.

In terms of biological role, RNA chaperone that binds small regulatory RNA (sRNAs) and mRNAs to facilitate mRNA translational regulation in response to envelope stress, environmental stress and changes in metabolite concentrations. Also binds with high specificity to tRNAs. This is RNA-binding protein Hfq from Paracidovorax citrulli (strain AAC00-1) (Acidovorax citrulli).